Consider the following 292-residue polypeptide: Elongation factor Ts (292 aa).

The tract at residues 79–82 (TDFV) is involved in Mg(2+) ion dislocation from EF-Tu.

This sequence belongs to the EF-Ts family.

Its subcellular location is the cytoplasm. In terms of biological role, associates with the EF-Tu.GDP complex and induces the exchange of GDP to GTP. It remains bound to the aminoacyl-tRNA.EF-Tu.GTP complex up to the GTP hydrolysis stage on the ribosome. The chain is Elongation factor Ts from Mycoplasmoides gallisepticum (strain R(low / passage 15 / clone 2)) (Mycoplasma gallisepticum).